The sequence spans 229 residues: tRNA (guanosine(18)-2'-O)-methyltransferase (229 aa).

S-adenosyl-L-methionine contacts are provided by Thr96, Ile139, and Leu148.

Belongs to the class IV-like SAM-binding methyltransferase superfamily. RNA methyltransferase TrmH family.

It catalyses the reaction guanosine(18) in tRNA + S-adenosyl-L-methionine = 2'-O-methylguanosine(18) in tRNA + S-adenosyl-L-homocysteine + H(+). Catalyzes the 2'-O methylation of guanosine at position 18 in tRNA. The chain is tRNA (guanosine(18)-2'-O)-methyltransferase from Escherichia coli O157:H7.